The sequence spans 296 residues: Cyclin-dependent kinase 1 (296 aa).

The Protein kinase domain maps to 5–288 (FQKLEKIGEG…AKNGLSHKYF (284 aa)). Residues 11–19 (IGEGTYGVV) and Lys34 contribute to the ATP site. Asp130 acts as the Proton acceptor in catalysis.

This sequence belongs to the protein kinase superfamily. CMGC Ser/Thr protein kinase family. CDC2/CDKX subfamily.

The protein resides in the nucleus. The enzyme catalyses L-seryl-[protein] + ATP = O-phospho-L-seryl-[protein] + ADP + H(+). It carries out the reaction L-threonyl-[protein] + ATP = O-phospho-L-threonyl-[protein] + ADP + H(+). Its function is as follows. Cyclin-dependent kinase that acts as a master regulator of the mitotic and meiotic cell cycles. This Encephalitozoon cuniculi (strain GB-M1) (Microsporidian parasite) protein is Cyclin-dependent kinase 1.